The chain runs to 119 residues: Dihydroneopterin aldolase (119 aa).

Substrate contacts are provided by residues Glu-21, Tyr-53, and 72–73 (IE). The active-site Proton donor/acceptor is Lys-99.

Belongs to the DHNA family.

It carries out the reaction 7,8-dihydroneopterin = 6-hydroxymethyl-7,8-dihydropterin + glycolaldehyde. The protein operates within cofactor biosynthesis; tetrahydrofolate biosynthesis; 2-amino-4-hydroxy-6-hydroxymethyl-7,8-dihydropteridine diphosphate from 7,8-dihydroneopterin triphosphate: step 3/4. In terms of biological role, catalyzes the conversion of 7,8-dihydroneopterin to 6-hydroxymethyl-7,8-dihydropterin. The chain is Dihydroneopterin aldolase (folB) from Streptococcus pyogenes serotype M3 (strain ATCC BAA-595 / MGAS315).